Here is a 252-residue protein sequence, read N- to C-terminus: Chitooligosaccharide deacetylase (252 aa).

2 residues coordinate Mg(2+): His-61 and His-125.

This sequence belongs to the YdjC deacetylase family. ChbG subfamily. In terms of assembly, homodimer. Mg(2+) serves as cofactor.

It is found in the cytoplasm. The catalysed reaction is N,N'-diacetylchitobiose + H2O = N-acetyl-beta-D-glucosaminyl-(1-&gt;4)-D-glucosamine + acetate. It carries out the reaction diacetylchitobiose-6'-phosphate + H2O = N'-monoacetylchitobiose-6'-phosphate + acetate. It participates in glycan degradation; chitin degradation. Functionally, involved in the degradation of chitin. ChbG is essential for growth on the acetylated chitooligosaccharides chitobiose and chitotriose but is dispensable for growth on cellobiose and chitosan dimer, the deacetylated form of chitobiose. Deacetylation of chitobiose-6-P and chitotriose-6-P is necessary for both the activation of the chb promoter by the regulatory protein ChbR and the hydrolysis of phosphorylated beta-glucosides by the phospho-beta-glucosidase ChbF. Catalyzes the removal of only one acetyl group from chitobiose-6-P to yield monoacetylchitobiose-6-P, the inducer of ChbR and the substrate of ChbF. In Salmonella paratyphi A (strain ATCC 9150 / SARB42), this protein is Chitooligosaccharide deacetylase.